The sequence spans 2104 residues: MSYLSKNGSNDNNNIIKKLVDAEKHCNAVKDASFDERTWIWIPDSKESFVKAWIVEDLGEKYRVKLERDGSERIVDGFDAEKVNPPKFDMVDDMAALTCLNEPSVVNNLTQRYEKDLIYTYSGLFLVAVNPYCHLPIYGDDVVRKYQSKQFKETKPHIFGTADAAYRSLLERRINQSILVTGESGAGKTETTKKVIQYLTSVTDASTSDSQQLEKKILETNPVLEAFGNAQTVRNNNSSRFGKFIRIEFSNNGSIVGANLDWYLLEKSRVIHPSSNERNYHVFYQLLRGADGSLLESLFLDRYVDHYSYLKNGLKHINGVDDGKEFQKLCFGLRTLGFDNNEIHSLFLIIASILHIGNIEVASDRSGQARFPSLTQIDQLCHLLEIPVDGFVNAALHPKSKAGREWIVTARTREQVVHTLQSLAKGLYERNFAHLVKRLNQTMYYSQSEHDGFIGVLDIAGFEIFTFNSFEQLCINFTNEKLQQFFNHYMFVLEQEEYTQERIEWDFIDYGNDLQPTIDAIEKSEPIGIFSCLDEDCVMPMATDATFTEKLHLLFKGKSDIYRPKKFSSEGFVLKHYAGDVEYDTKDWLEKNKDPLNACLAALMFKSTNSHVSSLFDDYSSNASGRDNIEKKGIFRTVSQRHRRQLSSLMHQLEATQPHFVRCIIPNNLKQPHNLDKSLVLHQLRCNGVLEGIRIAQTGFPNKLFYTEFRARYGILSQSLKRGYVEAKKATITIINELKLPSTVYRLGETKVFFKASVLGSLEDRRNALLRVIFNSFSARIRGFLTRRRLYRFNHRQDAAILLQHNLRQLKLLKPHPWWNLFLHLKPLLGTTQTDEYLRRKDALINNLQNQLESTKEVANELTITKERVLQLTNDLQEEQALAHEKDILVERANSRVEVVHERLSSLENQVTIADEKYEFLYAEKQSIEEDLANKQTEISYLSDLSSTLEKKLSSIKKDEQTISSKYKELEKDYLNIMADYQHSSQHLSNLEKAINEKNLNIRELNEKLMRLDDELLLKQRSYDTKVQELREENASLKDQCRTYESQLASLVSKYSETESELNKKEAELVIFQKEITEYRDQLHKAFQNPEKTHNINDVKSGPLNSDENIYSTSSTTLSILKDVQELKSLHTKEANQLSERIKEISEMLEQSIATEEKLRRKNSELCDIIEALKYQIQDQETEIISLNADNLDLKDTNGVLEKNASDFIDFQGIKSRYEHKISDLLNQLQKERCKVGLLKQKTENRSVTQHTLDGNSPHPSFEEKHSGDPLKRIDGNNDDRKIDNKLLKTISKSLDALQLTVEEELSNLYSLSKDLSFTDISGHIPNSIRKLEKGLSTLSELKERLNASNSDRPSPDIFKDTQAIMNSRKLLSNPNSDAQSGLISSLQKKLYNPESNMEFTGLKPLSPSKISNLPSSQPGSPSKRSGKMEALIRNFDQNSSIPDPFIVNQRNSVLQTEFEKINLKLKEATKSGILDNKDLSKFSELIQSLLKENEELKNLTTSNLGSDDKMLDFAPLLEDVPNNTRNQIKGFVEKAISSKRAIAKLYSASEEKLFSTEKALREITKERDRLLHGLQGPSVPTSPLKAPTASQLIIPNFDGSITNYSGEEETEWLQEEVNIMKIKELTSTVNKYREQLAMVQSLNEHAESSLSKAERSKNYLTGRLQEVEELARGFQTTNADLQNELADAVVKQKEYEVLYVEKSNDYNTLLLQKEKLMKQIDEFHVIRVQDLEEREKKDQLLFQRYQKELNGFKVQLEEEREKNLRIRQDNRHMHAEIGDIRTKFDELVLEKTNLLKENSILQADLQSLSRVNNSSSTAQQNAQSQLLSLTAQLQEVREANQTLRKDQDTLLRENRNLERKLHEVSEQLNKKFDSSARPFDEIEMEKEVLTLKSNLAQKDDLLSSLVERIKQIEMFALKTQKDSNNHREENLQLHRQLGVLQKEKKDLELKLFDLDLKTYPISTSKDVRMLQKQISDLEASFAASDIERIKGIDECRNRDRTIRQLEAQISKFDDDKKRIQSSVSRLEERNAQLRNQLEDVQASETQWKFALRRTEHALQEERERVKSLETDFDKYRSLLEGQRVKRSESRLSMRSNRSPSVLR.

One can recognise a Myosin N-terminal SH3-like domain in the interval 35–85 (DERTWIWIPDSKESFVKAWIVEDLGEKYRVKLERDGSERIVDGFDAEKVNP). Positions 89–767 (DMVDDMAALT…VLGSLEDRRN (679 aa)) constitute a Myosin motor domain. 182–189 (GESGAGKT) contacts ATP. The tract at residues 646–660 (LSSLMHQLEATQPHF) is actin-binding. Residues 829–2104 (LGTTQTDEYL…RSNRSPSVLR (1276 aa)) adopt a coiled-coil conformation. Disordered regions lie at residues 1245-1278 (NRSV…DGNN) and 1398-1426 (MEFT…SKRS). Positions 1246-1259 (RSVTQHTLDGNSPH) are enriched in polar residues. Over residues 1261-1278 (SFEEKHSGDPLKRIDGNN) the composition is skewed to basic and acidic residues. Polar residues predominate over residues 1409-1424 (SKISNLPSSQPGSPSK). Ser-1421 bears the Phosphoserine mark.

Belongs to the TRAFAC class myosin-kinesin ATPase superfamily. Myosin family. As to quaternary structure, binds to cdc4 and rlc1.

Functionally, stabilizes the F-actin cables forming the F-actin ring that surrounds the nucleus during interphase. May work in conjunction with myo2. The protein is Myosin type-2 heavy chain 2 (myo3) of Schizosaccharomyces pombe (strain 972 / ATCC 24843) (Fission yeast).